Reading from the N-terminus, the 851-residue chain is Oligopeptide transport ATP-binding protein OppF (851 aa).

The ABC transporter domain maps to 14 to 788 (VKALSMLFKV…PVHPYTRSLI (775 aa)). Residue 48–55 (GESGSGKS) coordinates ATP.

It belongs to the ABC transporter superfamily. In terms of assembly, the complex is composed of two ATP-binding proteins (OppD and OppF), two transmembrane proteins (OppB and OppC) and a solute-binding protein (OppA).

It is found in the cell membrane. It carries out the reaction a [peptide](out) + ATP + H2O = a [peptide](in) + ADP + phosphate + H(+). Part of the ABC transporter complex OppABCDF involved in the uptake of oligopeptides. Probably responsible for energy coupling to the transport system. The sequence is that of Oligopeptide transport ATP-binding protein OppF (oppF) from Mycoplasma pneumoniae (strain ATCC 29342 / M129 / Subtype 1) (Mycoplasmoides pneumoniae).